Here is a 417-residue protein sequence, read N- to C-terminus: Putative plant UBX domain-containing protein 14 (417 aa).

The UBX domain maps to 335 to 415 (DRSVVCSICV…GIANSMISVT (81 aa)).

The protein is Putative plant UBX domain-containing protein 14 of Arabidopsis thaliana (Mouse-ear cress).